The chain runs to 261 residues: Enolase-phosphatase E1 (261 aa).

Mg(2+)-binding residues include D16 and E18. Residues S150–S151 and K184 each bind substrate. D209 contacts Mg(2+).

It belongs to the HAD-like hydrolase superfamily. MasA/MtnC family. In terms of assembly, monomer. Mg(2+) serves as cofactor.

The protein localises to the cytoplasm. It localises to the nucleus. The catalysed reaction is 5-methylsulfanyl-2,3-dioxopentyl phosphate + H2O = 1,2-dihydroxy-5-(methylsulfanyl)pent-1-en-3-one + phosphate. Its pathway is amino-acid biosynthesis; L-methionine biosynthesis via salvage pathway; L-methionine from S-methyl-5-thio-alpha-D-ribose 1-phosphate: step 3/6. It functions in the pathway amino-acid biosynthesis; L-methionine biosynthesis via salvage pathway; L-methionine from S-methyl-5-thio-alpha-D-ribose 1-phosphate: step 4/6. Functionally, bifunctional enzyme that catalyzes the enolization of 2,3-diketo-5-methylthiopentyl-1-phosphate (DK-MTP-1-P) into the intermediate 2-hydroxy-3-keto-5-methylthiopentenyl-1-phosphate (HK-MTPenyl-1-P), which is then dephosphorylated to form the acireductone 1,2-dihydroxy-3-keto-5-methylthiopentene (DHK-MTPene). The polypeptide is Enolase-phosphatase E1 (Enoph1) (Rattus norvegicus (Rat)).